Reading from the N-terminus, the 535-residue chain is MKDYTLSEFLNRRLALLGERNNLSLLEQCLHGIERECLRVTATAELACTPHPQALGAALTNGQVTTDYSESLLEFITPALKNPAETIDNLDRIHRFVYSKLGDELLWSPSMPCPLPDEEHIPIAYYGTSNIGKLKYVYRKGLALRYGKTMQCIAGIHYNFSLPEDAWALLKQTEDFAGDARDYQSHSYIALIRNFRRYSWLLMYLFGASPALDAGFLRGRKHQLEQHFDADTLYLPYATSLRMSDLGYQSDAQADLTPCYNDLVSYTDSLRKAVATPYKPYVEVGTHDQNGEWVQLNTNVLQIENEYYSNIRPKRVTYSGERPIQALVARGVQYVEVRCLDINPFLPTGISLEQSRFIDAFVLYCALEESQQLARHECSNASSNFLSVVKEGRRPGLSLMRDNRPVDLKTWATELMEKITPIARLLDQAQGIDEHLKSIAVQQAKIDDTALTPSAQVLASMEAHNEGFTAFSLRQSQVHAEYFRTHPLSAQEQADFEAQAKTSIEEQAELEATEEVVDFDTFVGSYQASILSISN.

Belongs to the glutamate--cysteine ligase type 1 family. Type 1 subfamily.

The enzyme catalyses L-cysteine + L-glutamate + ATP = gamma-L-glutamyl-L-cysteine + ADP + phosphate + H(+). It participates in sulfur metabolism; glutathione biosynthesis; glutathione from L-cysteine and L-glutamate: step 1/2. The chain is Glutamate--cysteine ligase from Pseudomonas syringae pv. syringae (strain B728a).